A 438-amino-acid polypeptide reads, in one-letter code: Glutamate--tRNA ligase 2 (438 aa).

The short motif at 6–16 (PSPTGDMHTGN) is the 'HIGH' region element. The 'KMSKS' region motif lies at 231 to 235 (KMSKR). K234 serves as a coordination point for ATP.

It belongs to the class-I aminoacyl-tRNA synthetase family. Glutamate--tRNA ligase type 1 subfamily. In terms of assembly, monomer.

It is found in the cytoplasm. It catalyses the reaction tRNA(Glu) + L-glutamate + ATP = L-glutamyl-tRNA(Glu) + AMP + diphosphate. Catalyzes the attachment of glutamate to tRNA(Glu) in a two-step reaction: glutamate is first activated by ATP to form Glu-AMP and then transferred to the acceptor end of tRNA(Glu). The protein is Glutamate--tRNA ligase 2 of Wolinella succinogenes (strain ATCC 29543 / DSM 1740 / CCUG 13145 / JCM 31913 / LMG 7466 / NCTC 11488 / FDC 602W) (Vibrio succinogenes).